Consider the following 521-residue polypeptide: ATP synthase subunit beta (521 aa).

Composition is skewed to low complexity over residues 1 to 21 (MAKA…AAKA) and 28 to 42 (PKTT…TKSG). The tract at residues 1 to 42 (MAKAATPKTTAAAEAKPAAKAPAKKAAPKTTAAAKPAATKSG) is disordered. 199–206 (GGAGVGKT) is a binding site for ATP.

It belongs to the ATPase alpha/beta chains family. F-type ATPases have 2 components, CF(1) - the catalytic core - and CF(0) - the membrane proton channel. CF(1) has five subunits: alpha(3), beta(3), gamma(1), delta(1), epsilon(1). CF(0) has three main subunits: a(1), b(2) and c(9-12). The alpha and beta chains form an alternating ring which encloses part of the gamma chain. CF(1) is attached to CF(0) by a central stalk formed by the gamma and epsilon chains, while a peripheral stalk is formed by the delta and b chains.

The protein resides in the cell inner membrane. The catalysed reaction is ATP + H2O + 4 H(+)(in) = ADP + phosphate + 5 H(+)(out). Its function is as follows. Produces ATP from ADP in the presence of a proton gradient across the membrane. The catalytic sites are hosted primarily by the beta subunits. The sequence is that of ATP synthase subunit beta from Brucella abortus (strain 2308).